The primary structure comprises 399 residues: F-box protein At1g10110 (399 aa).

Residues 9–56 enclose the F-box domain; that stretch reads PNWSELVTDILSLVFKHLSFTDFARAKTVCSSWYFASKSSSPRKNHTP.

This chain is F-box protein At1g10110, found in Arabidopsis thaliana (Mouse-ear cress).